A 385-amino-acid chain; its full sequence is uncharacterized protein (385 aa).

This is an uncharacterized protein from Caenorhabditis elegans.